The sequence spans 121 residues: Ribonuclease P protein component (121 aa).

This sequence belongs to the RnpA family. Consists of a catalytic RNA component (M1 or rnpB) and a protein subunit.

The enzyme catalyses Endonucleolytic cleavage of RNA, removing 5'-extranucleotides from tRNA precursor.. RNaseP catalyzes the removal of the 5'-leader sequence from pre-tRNA to produce the mature 5'-terminus. It can also cleave other RNA substrates such as 4.5S RNA. The protein component plays an auxiliary but essential role in vivo by binding to the 5'-leader sequence and broadening the substrate specificity of the ribozyme. The protein is Ribonuclease P protein component of Geobacillus kaustophilus (strain HTA426).